A 257-amino-acid polypeptide reads, in one-letter code: Thiazole synthase (257 aa).

The Schiff-base intermediate with DXP role is filled by Lys-96. 1-deoxy-D-xylulose 5-phosphate contacts are provided by residues Gly-157, 184–185 (AG), and 206–207 (NT).

This sequence belongs to the ThiG family. Homotetramer. Forms heterodimers with either ThiH or ThiS.

The protein localises to the cytoplasm. It catalyses the reaction [ThiS sulfur-carrier protein]-C-terminal-Gly-aminoethanethioate + 2-iminoacetate + 1-deoxy-D-xylulose 5-phosphate = [ThiS sulfur-carrier protein]-C-terminal Gly-Gly + 2-[(2R,5Z)-2-carboxy-4-methylthiazol-5(2H)-ylidene]ethyl phosphate + 2 H2O + H(+). The protein operates within cofactor biosynthesis; thiamine diphosphate biosynthesis. Its function is as follows. Catalyzes the rearrangement of 1-deoxy-D-xylulose 5-phosphate (DXP) to produce the thiazole phosphate moiety of thiamine. Sulfur is provided by the thiocarboxylate moiety of the carrier protein ThiS. In vitro, sulfur can be provided by H(2)S. This is Thiazole synthase from Rhizobium rhizogenes (strain K84 / ATCC BAA-868) (Agrobacterium radiobacter).